An 896-amino-acid chain; its full sequence is Alanine--tRNA ligase (896 aa).

His599, His603, Cys707, and His711 together coordinate Zn(2+).

It belongs to the class-II aminoacyl-tRNA synthetase family. It depends on Zn(2+) as a cofactor.

The protein resides in the cytoplasm. The catalysed reaction is tRNA(Ala) + L-alanine + ATP = L-alanyl-tRNA(Ala) + AMP + diphosphate. Catalyzes the attachment of alanine to tRNA(Ala) in a two-step reaction: alanine is first activated by ATP to form Ala-AMP and then transferred to the acceptor end of tRNA(Ala). Also edits incorrectly charged Ser-tRNA(Ala) and Gly-tRNA(Ala) via its editing domain. This chain is Alanine--tRNA ligase, found in Pyrobaculum calidifontis (strain DSM 21063 / JCM 11548 / VA1).